Reading from the N-terminus, the 523-residue chain is Cyclic di-GMP binding protein BcsE (523 aa).

Belongs to the BcsE family.

Its function is as follows. Required for cellulose biosynthesis. May have protease activity, but BcsA is not targeted. Binds bis-(3'-5') cyclic diguanylic acid (c-di-GMP). The polypeptide is Cyclic di-GMP binding protein BcsE (Salmonella typhimurium (strain LT2 / SGSC1412 / ATCC 700720)).